The chain runs to 382 residues: MKALHFGAGNIGRGFIGKLLADAGIQLTFADVNQVVLDALNARHSYQVHVVGENEQVDTVSGVNAVSSIGDDVVDLIAHVDLITTAVGPVVLERIAPAIAKGLVKRKAQGVDAPLNIIACENMVRGTTQLKGHVMNALADGDKAWVEQHVGFVDSAVDRIVPPSASATHDPLEVTVETFSEWIVDKTQFKGALPTIPGMELTDNLMAFVERKLFTLNTGHAITAYLGKLAGHQTIRDAILDESIRAVVKGAMEESGAVLIKRYGFDADKHAAYIQKILGRFENPYLKDDVERVGRQPLRKLSAGDRLIKPLLGTLEYGLPHVNLVKGIAAAMHFRSEEDPQAQELAALIDEKGPQAALAQISGLDANSDVVAEAVNAYNATK.

Position 3 to 14 (3 to 14 (ALHFGAGNIGRG)) interacts with NAD(+).

This sequence belongs to the mannitol dehydrogenase family.

It catalyses the reaction D-mannitol 1-phosphate + NAD(+) = beta-D-fructose 6-phosphate + NADH + H(+). In Salmonella schwarzengrund (strain CVM19633), this protein is Mannitol-1-phosphate 5-dehydrogenase.